A 707-amino-acid chain; its full sequence is UvrABC system protein C (707 aa).

The region spanning 14–94 (AEPGCYLMKD…IKKHRPRFNV (81 aa)) is the GIY-YIG domain. In terms of domain architecture, UVR spans 206-241 (GELVERLRGRMAGAAEGLRFEEAARLRDQLQAVERS). The segment at 654 to 684 (PDAPPAAADEPSGAPEGTPAGGPAEAIPDAA) is disordered. Over residues 658-684 (PAAADEPSGAPEGTPAGGPAEAIPDAA) the composition is skewed to low complexity.

This sequence belongs to the UvrC family. Interacts with UvrB in an incision complex.

It localises to the cytoplasm. The UvrABC repair system catalyzes the recognition and processing of DNA lesions. UvrC both incises the 5' and 3' sides of the lesion. The N-terminal half is responsible for the 3' incision and the C-terminal half is responsible for the 5' incision. This is UvrABC system protein C from Anaeromyxobacter dehalogenans (strain 2CP-C).